Reading from the N-terminus, the 119-residue chain is Large ribosomal subunit protein uL18 (119 aa).

It belongs to the universal ribosomal protein uL18 family. Part of the 50S ribosomal subunit; part of the 5S rRNA/L5/L18/L25 subcomplex. Contacts the 5S and 23S rRNAs.

Its function is as follows. This is one of the proteins that bind and probably mediate the attachment of the 5S RNA into the large ribosomal subunit, where it forms part of the central protuberance. This is Large ribosomal subunit protein uL18 from Staphylococcus aureus (strain Mu3 / ATCC 700698).